The primary structure comprises 230 residues: RING finger protein 141 (230 aa).

Gly2 is lipidated: N-myristoyl glycine. Residues 155 to 192 (CCICMDGRADLILPCAHSFCQKCIDKWSDRHRNCPICR) form an RING-type zinc finger.

It is found in the membrane. Its function is as follows. May be involved in spermatogenesis. The protein is RING finger protein 141 (RNF141) of Pongo abelii (Sumatran orangutan).